Consider the following 581-residue polypeptide: Arginine--tRNA ligase (581 aa).

The 'HIGH' region signature appears at 126–136; sequence PNLAKEMHVGH.

The protein belongs to the class-I aminoacyl-tRNA synthetase family. Monomer.

The protein localises to the cytoplasm. It carries out the reaction tRNA(Arg) + L-arginine + ATP = L-arginyl-tRNA(Arg) + AMP + diphosphate. This chain is Arginine--tRNA ligase, found in Shewanella frigidimarina (strain NCIMB 400).